Reading from the N-terminus, the 606-residue chain is Proline--tRNA ligase (606 aa).

The protein belongs to the class-II aminoacyl-tRNA synthetase family. ProS type 1 subfamily. Homodimer.

The protein localises to the cytoplasm. The catalysed reaction is tRNA(Pro) + L-proline + ATP = L-prolyl-tRNA(Pro) + AMP + diphosphate. Its function is as follows. Catalyzes the attachment of proline to tRNA(Pro) in a two-step reaction: proline is first activated by ATP to form Pro-AMP and then transferred to the acceptor end of tRNA(Pro). As ProRS can inadvertently accommodate and process non-cognate amino acids such as alanine and cysteine, to avoid such errors it has two additional distinct editing activities against alanine. One activity is designated as 'pretransfer' editing and involves the tRNA(Pro)-independent hydrolysis of activated Ala-AMP. The other activity is designated 'posttransfer' editing and involves deacylation of mischarged Ala-tRNA(Pro). The misacylated Cys-tRNA(Pro) is not edited by ProRS. This chain is Proline--tRNA ligase, found in Kocuria rhizophila (strain ATCC 9341 / DSM 348 / NBRC 103217 / DC2201).